Here is a 634-residue protein sequence, read N- to C-terminus: DNA-directed RNA polymerase subunit gamma (634 aa).

Zn(2+) contacts are provided by Cys-74, Cys-76, Cys-89, and Cys-92. 3 residues coordinate Mg(2+): Asp-471, Asp-473, and Asp-475.

Belongs to the RNA polymerase beta' chain family. RpoC1 subfamily. As to quaternary structure, in cyanobacteria the RNAP catalytic core is composed of 2 alpha, 1 beta, 1 beta', 1 gamma and 1 omega subunit. When a sigma factor is associated with the core the holoenzyme is formed, which can initiate transcription. Requires Mg(2+) as cofactor. The cofactor is Zn(2+).

The catalysed reaction is RNA(n) + a ribonucleoside 5'-triphosphate = RNA(n+1) + diphosphate. Its function is as follows. DNA-dependent RNA polymerase catalyzes the transcription of DNA into RNA using the four ribonucleoside triphosphates as substrates. The protein is DNA-directed RNA polymerase subunit gamma of Synechococcus sp. (strain RCC307).